Consider the following 177-residue polypeptide: Photosystem I assembly protein Ycf4 (177 aa).

Helical transmembrane passes span 20–40 (VALLVSIGGVGFLLTSASSYF) and 60–80 (LVMGAYGVGAVLLSSYLWAVI).

The protein belongs to the Ycf4 family.

The protein resides in the cellular thylakoid membrane. In terms of biological role, seems to be required for the assembly of the photosystem I complex. The sequence is that of Photosystem I assembly protein Ycf4 from Synechococcus sp. (strain RCC307).